Reading from the N-terminus, the 161-residue chain is Lipoprotein signal peptidase (161 aa).

The next 3 membrane-spanning stretches (helical) occupy residues 9-29 (ISLL…WLIT), 63-83 (KMLF…IFYI), and 88-108 (FNLF…GNFI). Catalysis depends on residues aspartate 118 and aspartate 136. Residues 131-151 (IFNIADSSLTIGVIFVIIALI) traverse the membrane as a helical segment.

It belongs to the peptidase A8 family.

The protein resides in the cell membrane. It carries out the reaction Release of signal peptides from bacterial membrane prolipoproteins. Hydrolyzes -Xaa-Yaa-Zaa-|-(S,diacylglyceryl)Cys-, in which Xaa is hydrophobic (preferably Leu), and Yaa (Ala or Ser) and Zaa (Gly or Ala) have small, neutral side chains.. Its pathway is protein modification; lipoprotein biosynthesis (signal peptide cleavage). This protein specifically catalyzes the removal of signal peptides from prolipoproteins. This chain is Lipoprotein signal peptidase, found in Staphylococcus epidermidis (strain ATCC 12228 / FDA PCI 1200).